We begin with the raw amino-acid sequence, 175 residues long: Small ribosomal subunit protein uS7 (175 aa).

Belongs to the universal ribosomal protein uS7 family. In terms of assembly, part of the 30S ribosomal subunit. Contacts proteins S9 and S11.

In terms of biological role, one of the primary rRNA binding proteins, it binds directly to 16S rRNA where it nucleates assembly of the head domain of the 30S subunit. Is located at the subunit interface close to the decoding center, probably blocks exit of the E-site tRNA. In Neorickettsia sennetsu (strain ATCC VR-367 / Miyayama) (Ehrlichia sennetsu), this protein is Small ribosomal subunit protein uS7.